Reading from the N-terminus, the 193-residue chain is Acyl carrier protein phosphodiesterase (193 aa).

Belongs to the AcpH family.

The enzyme catalyses holo-[ACP] + H2O = apo-[ACP] + (R)-4'-phosphopantetheine + H(+). Converts holo-ACP to apo-ACP by hydrolytic cleavage of the phosphopantetheine prosthetic group from ACP. This Salmonella choleraesuis (strain SC-B67) protein is Acyl carrier protein phosphodiesterase.